The sequence spans 190 residues: Threonylcarbamoyl-AMP synthase (190 aa).

Positions 7-190 (LSSLIKCIRK…IVNGKLIRYV (184 aa)) constitute a YrdC-like domain.

Belongs to the SUA5 family. TsaC subfamily.

It is found in the cytoplasm. It catalyses the reaction L-threonine + hydrogencarbonate + ATP = L-threonylcarbamoyladenylate + diphosphate + H2O. Functionally, required for the formation of a threonylcarbamoyl group on adenosine at position 37 (t(6)A37) in tRNAs that read codons beginning with adenine. Catalyzes the conversion of L-threonine, HCO(3)(-)/CO(2) and ATP to give threonylcarbamoyl-AMP (TC-AMP) as the acyladenylate intermediate, with the release of diphosphate. This is Threonylcarbamoyl-AMP synthase from Buchnera aphidicola subsp. Schizaphis graminum (strain Sg).